The chain runs to 1339 residues: Receptor tyrosine-protein kinase erbB-3 (1339 aa).

A signal peptide spans Met1–Gly19. Over Ser20 to Val643 the chain is Extracellular. N-linked (GlcNAc...) asparagine glycosylation occurs at Asn126. 11 cysteine pairs are disulfide-bonded: Cys186/Cys194, Cys190/Cys202, Cys210/Cys218, Cys214/Cys226, Cys227/Cys235, Cys231/Cys243, Cys246/Cys255, Cys259/Cys286, Cys290/Cys301, Cys305/Cys320, and Cys323/Cys327. A glycan (N-linked (GlcNAc...) asparagine) is linked at Asn250. N-linked (GlcNAc...) asparagine glycans are attached at residues Asn353, Asn408, Asn414, Asn437, and Asn469. 10 disulfides stabilise this stretch: Cys500-Cys509, Cys504-Cys517, Cys520-Cys529, Cys533-Cys549, Cys552-Cys565, Cys556-Cys573, Cys576-Cys585, Cys589-Cys610, Cys613-Cys621, and Cys617-Cys629. Asn522 carries an N-linked (GlcNAc...) asparagine glycan. A glycan (N-linked (GlcNAc...) asparagine) is linked at Asn566. Residue Asn616 is glycosylated (N-linked (GlcNAc...) asparagine). Residues Ile644–Leu662 form a helical membrane-spanning segment. Residues Tyr663–Thr1339 lie on the Cytoplasmic side of the membrane. Phosphoserine is present on Ser684. Residues Leu707–Thr964 form the Protein kinase domain. ATP-binding positions include Leu713–Val721, Lys740, Gln786–Leu788, and Asp832–Asn837. Asp832 serves as the catalytic Proton acceptor. Ser980 is modified (phosphoserine). A compositionally biased stretch (low complexity) spans Ser1023 to Thr1036. Disordered stretches follow at residues Ser1023–Met1052 and Pro1078–Glu1215. The segment covering Arg1039–Met1052 has biased composition (polar residues). The span at Gly1172–Gly1184 shows a compositional bias: low complexity. The segment covering Thr1185 to Glu1195 has biased composition (acidic residues).

It belongs to the protein kinase superfamily. Tyr protein kinase family. EGF receptor subfamily. In terms of assembly, monomer and homodimer. Heterodimer with each of the other ERBB receptors (Potential). Interacts with CSPG5, PA2G4, GRB7, MYOC and MUC1. Found in a ternary complex with NRG1 and ITGAV:ITGB3 or ITGA6:ITGB4. Autophosphorylated. Ligand-binding increases phosphorylation on tyrosine residues and promotes its association with the p85 subunit of phosphatidylinositol 3-kinase.

It is found in the membrane. It catalyses the reaction L-tyrosyl-[protein] + ATP = O-phospho-L-tyrosyl-[protein] + ADP + H(+). Its function is as follows. Tyrosine-protein kinase that plays an essential role as cell surface receptor for neuregulins. Binds to neuregulin-1 (NRG1) and is activated by it; ligand-binding increases phosphorylation on tyrosine residues and promotes its association with the p85 subunit of phosphatidylinositol 3-kinase. May also be activated by CSPG5. Involved in the regulation of myeloid cell differentiation. This is Receptor tyrosine-protein kinase erbB-3 (Erbb3) from Rattus norvegicus (Rat).